A 344-amino-acid chain; its full sequence is DNA-directed RNA polymerase subunit alpha (344 aa).

Positions 1–246 are alpha N-terminal domain (alpha-NTD); it reads MPMERFLKDF…EFLFPLVDFE (246 aa). The tract at residues 259 to 344 is alpha C-terminal domain (alpha-CTD); sequence ESSNLLDMSI…VLSKNVKISE (86 aa).

This sequence belongs to the RNA polymerase alpha chain family. In terms of assembly, homodimer. The RNAP catalytic core consists of 2 alpha, 1 beta, 1 beta' and 1 omega subunit. When a sigma factor is associated with the core the holoenzyme is formed, which can initiate transcription.

The enzyme catalyses RNA(n) + a ribonucleoside 5'-triphosphate = RNA(n+1) + diphosphate. In terms of biological role, DNA-dependent RNA polymerase catalyzes the transcription of DNA into RNA using the four ribonucleoside triphosphates as substrates. The chain is DNA-directed RNA polymerase subunit alpha from Borreliella afzelii (strain PKo) (Borrelia afzelii).